The sequence spans 325 residues: Lipoyl synthase (325 aa).

The tract at residues 1-31 is disordered; it reads MASDSDLLDTKPAETRHPEKAHRPDQPTLRK. A compositionally biased stretch (basic and acidic residues) spans 8-31; the sequence is LDTKPAETRHPEKAHRPDQPTLRK. [4Fe-4S] cluster is bound by residues Cys61, Cys66, Cys72, Cys87, Cys91, Cys94, and Ser300. A Radical SAM core domain is found at 73–289; the sequence is WAKKHATFMI…AEIGRAKGFL (217 aa).

The protein belongs to the radical SAM superfamily. Lipoyl synthase family. Requires [4Fe-4S] cluster as cofactor.

It localises to the cytoplasm. It catalyses the reaction [[Fe-S] cluster scaffold protein carrying a second [4Fe-4S](2+) cluster] + N(6)-octanoyl-L-lysyl-[protein] + 2 oxidized [2Fe-2S]-[ferredoxin] + 2 S-adenosyl-L-methionine + 4 H(+) = [[Fe-S] cluster scaffold protein] + N(6)-[(R)-dihydrolipoyl]-L-lysyl-[protein] + 4 Fe(3+) + 2 hydrogen sulfide + 2 5'-deoxyadenosine + 2 L-methionine + 2 reduced [2Fe-2S]-[ferredoxin]. Its pathway is protein modification; protein lipoylation via endogenous pathway; protein N(6)-(lipoyl)lysine from octanoyl-[acyl-carrier-protein]: step 2/2. Functionally, catalyzes the radical-mediated insertion of two sulfur atoms into the C-6 and C-8 positions of the octanoyl moiety bound to the lipoyl domains of lipoate-dependent enzymes, thereby converting the octanoylated domains into lipoylated derivatives. This is Lipoyl synthase from Methylocella silvestris (strain DSM 15510 / CIP 108128 / LMG 27833 / NCIMB 13906 / BL2).